A 48-amino-acid chain; its full sequence is GIFPKIIGKGIKTGIVNGIKSLVKGVGMKVFKAGLSNIGNTGCNEDEC.

An intrachain disulfide couples cysteine 43 to cysteine 48.

In terms of tissue distribution, expressed by the skin glands.

The protein localises to the secreted. In terms of biological role, antimicrobial activity against Gram-negative bacterium E.coli. The polypeptide is Palustrin-3b (Lithobates palustris (Pickerel frog)).